A 466-amino-acid chain; its full sequence is Ribulose bisphosphate carboxylase large chain (466 aa).

An N6,N6,N6-trimethyllysine modification is found at K5. Substrate is bound by residues N114 and T164. The active-site Proton acceptor is the K166. K168 contacts substrate. 3 residues coordinate Mg(2+): K192, D194, and E195. The residue at position 192 (K192) is an N6-carboxylysine. H285 acts as the Proton acceptor in catalysis. Residues R286, H318, and S370 each contribute to the substrate site.

It belongs to the RuBisCO large chain family. Type I subfamily. Heterohexadecamer of 8 large chains and 8 small chains; disulfide-linked. The disulfide link is formed within the large subunit homodimers. Mg(2+) is required as a cofactor. In terms of processing, the disulfide bond which can form in the large chain dimeric partners within the hexadecamer appears to be associated with oxidative stress and protein turnover.

It is found in the plastid. The protein localises to the chloroplast. The enzyme catalyses 2 (2R)-3-phosphoglycerate + 2 H(+) = D-ribulose 1,5-bisphosphate + CO2 + H2O. It catalyses the reaction D-ribulose 1,5-bisphosphate + O2 = 2-phosphoglycolate + (2R)-3-phosphoglycerate + 2 H(+). Its function is as follows. RuBisCO catalyzes two reactions: the carboxylation of D-ribulose 1,5-bisphosphate, the primary event in carbon dioxide fixation, as well as the oxidative fragmentation of the pentose substrate in the photorespiration process. Both reactions occur simultaneously and in competition at the same active site. This is Ribulose bisphosphate carboxylase large chain from Adenium obesum (Desert rose).